A 196-amino-acid polypeptide reads, in one-letter code: DnaA initiator-associating protein DiaA (196 aa).

The SIS domain occupies 34 to 196; sequence LVHSLLNGNK…DNTLFPHQDD (163 aa).

The protein belongs to the SIS family. DiaA subfamily. Homotetramer; dimer of dimers.

Required for the timely initiation of chromosomal replication via direct interactions with the DnaA initiator protein. The polypeptide is DnaA initiator-associating protein DiaA (Citrobacter koseri (strain ATCC BAA-895 / CDC 4225-83 / SGSC4696)).